The primary structure comprises 436 residues: Cyclin-A2-2 (436 aa).

The protein belongs to the cyclin family. Cyclin AB subfamily. As to expression, expressed in roots, stems, leaves, flowers and siliques.

This chain is Cyclin-A2-2 (CYCA2-2), found in Arabidopsis thaliana (Mouse-ear cress).